The following is a 270-amino-acid chain: tRNA pseudouridine synthase A (270 aa).

The active-site Nucleophile is Asp51. Tyr109 is a substrate binding site.

This sequence belongs to the tRNA pseudouridine synthase TruA family. As to quaternary structure, homodimer.

The catalysed reaction is uridine(38/39/40) in tRNA = pseudouridine(38/39/40) in tRNA. In terms of biological role, formation of pseudouridine at positions 38, 39 and 40 in the anticodon stem and loop of transfer RNAs. In Burkholderia orbicola (strain MC0-3), this protein is tRNA pseudouridine synthase A.